The following is a 139-amino-acid chain: Large-conductance mechanosensitive channel (139 aa).

The next 3 helical transmembrane spans lie at 14–34 (VVDL…VNSA), 38–58 (IFMP…YYIP), and 82–102 (GQFL…FLVI).

This sequence belongs to the MscL family. As to quaternary structure, homopentamer.

It is found in the cell inner membrane. In terms of biological role, channel that opens in response to stretch forces in the membrane lipid bilayer. May participate in the regulation of osmotic pressure changes within the cell. This Methylobacterium radiotolerans (strain ATCC 27329 / DSM 1819 / JCM 2831 / NBRC 15690 / NCIMB 10815 / 0-1) protein is Large-conductance mechanosensitive channel.